The sequence spans 324 residues: MSNMPDQRRGPWSAGEDQRLIKLVKDLGPGNWVNVARILGTRTPKQCRERWHQNLKPGLNHGPMTQEEAAIIVREVDLKGPRWADIARKLQGRSDNAVKNYWNGLNNRKKNQLRRQSAPRRVSASDVLRSSPGQLPRAHMQRPIRYPQDIYTGSRRPSSPSSFNDSLHHRVHESIEWFPSRPQQQQQQQQQQARCTTPFTSFYPPSHAFPTTDGYQDGSDGPTGSTLRLLTPPTSRRLAPFSTLPSPTTSSIGDLDEFDRRQLAAFAPPAAYRRPSLPFPQQSSMGYLPSATEYLPTAPSSPIALIQRDEKNHARIPVTSLLCS.

2 HTH myb-type domains span residues 4 to 59 (MPDQ…KPGL) and 60 to 110 (NHGP…NRKK). Positions 107–231 (NRKKNQLRRQ…PTGSTLRLLT (125 aa)) are disordered. Over residues 155–165 (RRPSSPSSFND) the composition is skewed to polar residues. Positions 166–175 (SLHHRVHESI) are enriched in basic and acidic residues. Low complexity-rich tracts occupy residues 183–192 (QQQQQQQQQQ) and 222–231 (PTGSTLRLLT).

The protein localises to the nucleus. In Neurospora crassa (strain ATCC 24698 / 74-OR23-1A / CBS 708.71 / DSM 1257 / FGSC 987), this protein is Myb-like DNA-binding protein myb-1 (rca-1).